The primary structure comprises 494 residues: Homeotic protein bicoid (494 aa).

Disordered stretches follow at residues 1-49, 149-210, and 263-293; these read MAQP…PPQF, RRRH…TAHM, and QQVHNHQQQLHHQGNHVPHQMQQQQQQAQQQ. Basic residues predominate over residues 14-40; sequence PLPHTHTHPHPHSHPHPHSHPHPHHQH. Positions 97–156 form a DNA-binding region, homeobox; sequence PRRTRTTFTSSQIAELEQHFLQGRYLTAPRLADLSAKLALGTAQVKIWFKNRRRRHKIQS. Basic and acidic residues predominate over residues 154-163; that stretch reads IQSDQHKDQS. Residues 433 to 440 are RNA-binding; that stretch reads RGAAFAKF.

The protein belongs to the paired homeobox family. Bicoid subfamily. Interacts with Bin1; in vitro and yeast cells. Interacts with bin3. In terms of tissue distribution, maternal expression is an anterior cap concentrated in the cortical cytoplasm. Its transcript is produced maternally and sequestered near the anterior pole of the mature oocyte. After egg deposition, it is translated into protein, which diffuses toward the posterior, forming a long-range anterior gradient.

It is found in the nucleus. Its function is as follows. Segment polarity transcription factor that provides positional cues for the development of head and thoracic segments. Forms a protein concentration gradient that patterns the anterior-posterior axis during embryogenesis and promotes the expression of anterior gap genes, such as hunchback (hb), ocelliless (oc), and buttonhead (btd). Binds to regulatory DNA sequences containing a 5'-TAATCC-3' sequence motif. Also binds RNA. Interacts with Bin1 to repress transcription of bicoid target genes in the anterior tip of the embryo; a process known as retraction. The chain is Homeotic protein bicoid from Drosophila melanogaster (Fruit fly).